Here is a 53-residue protein sequence, read N- to C-terminus: Ovomucoid (53 aa).

One can recognise a Kazal-like domain in the interval 3–53 (VDCSEYPKPGCMMERLPLCGSDNKTYNDKCNFCNAVVESNGTLTLNHFGEC). 3 disulfides stabilise this stretch: Cys5–Cys35, Cys13–Cys32, and Cys21–Cys53. Asn42 carries N-linked (GlcNAc...) asparagine glycosylation.

The protein localises to the secreted. The protein is Ovomucoid of Turnix sylvaticus (Common buttonquail).